Reading from the N-terminus, the 443-residue chain is UDP-N-acetylmuramate--L-alanine ligase (443 aa).

110–116 (GAHGKTS) contributes to the ATP binding site.

It belongs to the MurCDEF family.

The protein resides in the cytoplasm. The catalysed reaction is UDP-N-acetyl-alpha-D-muramate + L-alanine + ATP = UDP-N-acetyl-alpha-D-muramoyl-L-alanine + ADP + phosphate + H(+). It functions in the pathway cell wall biogenesis; peptidoglycan biosynthesis. Its function is as follows. Cell wall formation. The polypeptide is UDP-N-acetylmuramate--L-alanine ligase (Lactococcus lactis subsp. cremoris (strain SK11)).